The chain runs to 86 residues: MKLLFAIVALLALAFLCADISAVKTSWPELVGETLEEAKAQILEDRPDAVIKVQPEHSPVTYDYRPSRVIIFVNKDGNVAETPAAG.

The signal sequence occupies residues 1 to 22 (MKLLFAIVALLALAFLCADISA).

It belongs to the protease inhibitor I13 (potato type I serine protease inhibitor) family. As to quaternary structure, monomer. Expressed in the body wall, coelomocytes and at a lower level in intestine.

The protein resides in the secreted. In terms of biological role, inhibits L.terrestris digestive chymotrypsin LT_CH 1 and bovine alpha-chymotrypsin. This is Chymotrypsin inhibitor from Lumbricus terrestris (Common earthworm).